Consider the following 508-residue polypeptide: UTP--glucose-1-phosphate uridylyltransferase (508 aa).

Serine 2 carries the N-acetylserine modification. Phosphoserine occurs at positions 2 and 13. Residues 113-116 (LNGG), lysine 127, glutamine 190, and glycine 222 each bind UTP. Position 115–116 (115–116 (GG)) interacts with substrate. A Mg(2+)-binding site is contributed by lysine 127. Substrate-binding positions include histidine 223, 251–253 (NID), and asparagine 330. Residue aspartate 253 participates in UTP binding. Aspartate 253 is a binding site for Mg(2+). Lysine 396 provides a ligand contact to UTP. Residue lysine 396 is part of the active site. Threonine 426 carries the post-translational modification Phosphothreonine. Serine 434 carries the post-translational modification Phosphoserine. Lysine 438 carries the N6-acetyllysine modification. Serine 448 and serine 461 each carry phosphoserine. The segment at 457 to 508 (HLTVSGDVTFGKNVSLKGTVIIIANHGDRIDIPPGAVLENKIVSGNLRILDH) is oligomerization. Residues 502-503 (NL) are critical for end-to-end subunit interaction.

It belongs to the UDPGP type 1 family. In terms of assembly, homooctamer. In terms of tissue distribution, highly expressed in various brain regions. Expressed in amygdala, anterior cingulate cortex, caudate, cerebellar hemisphere, cerebellum, cortex, frontal cortex, hippocampus, hypothalamus, nucleus accumbens, putamen, spinal cord and substantia nigra. Also widely expressed among other tissues, including liver, heart, placenta, lung, kidney, pancreas and skeletal muscle.

The protein localises to the cytoplasm. The catalysed reaction is alpha-D-glucose 1-phosphate + UTP + H(+) = UDP-alpha-D-glucose + diphosphate. Its pathway is glycan biosynthesis; glycogen biosynthesis. In terms of biological role, UTP--glucose-1-phosphate uridylyltransferase catalyzing the conversion of glucose-1-phosphate into UDP-glucose, a crucial precursor for the production of glycogen. The chain is UTP--glucose-1-phosphate uridylyltransferase from Homo sapiens (Human).